The chain runs to 279 residues: Thioredoxin-like 1-1, chloroplastic (279 aa).

Residues 56-202 form the Thioredoxin domain; the sequence is ALTERKARPL…FKDALAKHGP (147 aa). Catalysis depends on nucleophile residues cysteine 125 and cysteine 128. Residues cysteine 125 and cysteine 128 are joined by a disulfide bond.

It belongs to the thioredoxin family.

Probable thiol-disulfide oxidoreductase that may participate in various redox reactions. The chain is Thioredoxin-like 1-1, chloroplastic from Oryza sativa subsp. japonica (Rice).